We begin with the raw amino-acid sequence, 102 residues long: snRNA-activating protein complex subunit 5 (102 aa).

Polar residues predominate over residues 73 to 82 (QTTLKLSTRS). Residues 73–102 (QTTLKLSTRSPMEEEEEEEEEEEEEEESDS) are disordered. Residues 85–102 (EEEEEEEEEEEEEEESDS) are compositionally biased toward acidic residues.

As to quaternary structure, part of the SNAPc complex composed of 5 subunits: SNAPC1, SNAPC2, SNAPC3, SNAPC4 and SNAPC5. SNAPC5 interacts with SNAPC4.

Its subcellular location is the nucleus. Part of the SNAPc complex required for the transcription of both RNA polymerase II and III small-nuclear RNA genes. Binds to the proximal sequence element (PSE), a non-TATA-box basal promoter element common to these 2 types of genes. Recruits TBP and BRF2 to the U6 snRNA TATA box. This Mus musculus (Mouse) protein is snRNA-activating protein complex subunit 5.